The primary structure comprises 273 residues: Bis(5'-nucleosyl)-tetraphosphatase, symmetrical (273 aa).

Belongs to the Ap4A hydrolase family.

The catalysed reaction is P(1),P(4)-bis(5'-adenosyl) tetraphosphate + H2O = 2 ADP + 2 H(+). Functionally, hydrolyzes diadenosine 5',5'''-P1,P4-tetraphosphate to yield ADP. The protein is Bis(5'-nucleosyl)-tetraphosphatase, symmetrical (apaH) of Buchnera aphidicola subsp. Schizaphis graminum (strain Sg).